A 277-amino-acid polypeptide reads, in one-letter code: Phycobilisome rod-core linker polypeptide CpcG1 (277 aa).

One can recognise a PBS-linker domain in the interval 11–189 (RTLDQRVVSY…YWRNKEISLS (179 aa)).

This sequence belongs to the phycobilisome linker protein family. The phycobilisome is a hemidiscoidal structure that is composed of two distinct substructures: a core complex and a number of rods radiating from the core.

The protein localises to the cellular thylakoid membrane. Rod-core linker protein required for attachment of phycocyanin to allophycocyanin in cores of phycobilisomes. Its function is as follows. Linker polypeptides determine the state of aggregation and the location of the disk-shaped phycobiliprotein units within the phycobilisome and modulate their spectroscopic properties in order to mediate a directed and optimal energy transfer. This Thermosynechococcus vestitus (strain NIES-2133 / IAM M-273 / BP-1) protein is Phycobilisome rod-core linker polypeptide CpcG1 (cpcG1).